A 387-amino-acid chain; its full sequence is O-methyltransferase fsr2 (387 aa).

Residue D231 participates in S-adenosyl-L-methionine binding. H280 serves as the catalytic Proton acceptor.

Belongs to the class I-like SAM-binding methyltransferase superfamily. Cation-independent O-methyltransferase family. COMT subfamily.

The protein operates within polyketide biosynthesis. O-methyltransferase; part of the gene cluster that mediates the biosynthesis of fusarubins, highly pigmented naphthoquinones responsible for the coloration of the fruiting bodies. The non-reducing polyketide synthase FSR1 is responsible for the condensation of seven acetyl-CoA units to yield a haptaketide. After rings A and B are formed by aldol-type cyclization, the PKS-derived product is released as 6-O-demethylfusarubinaldehyde. Then, two hydroxyl groups at C-5 and C-10 are incorporated by FSR3, and simultaneously hydroxyl groups at C-6 and C-8 are methylated by FSR2. The aldehyde is, on the one hand, reduced by FSR3 to 8-O-methylfusarubin alcohol, which equilibrates mainly with 8-O-methylfusarubin and only small amounts of 8-O-methylnectriafurone. On the other hand, the aldehyde can be oxidized to form 8-O-methylfusarubinic acid, a reaction driven by FSR3 equilibrating with 8-O-methylfusarubinlactone, finally resulting in 8-O-methylanhydrofusarubinlactol after a further reduction step and loss of water. 8-O-Methylfusarubinic acid can also undergo decarboxylation, resulting in 8-O-methyl-13-hydroxynorjavanicin after another hydroxylation step at C-13. Both steps are most likely also accomplished by FSR3. No enzymatic function has been determined so far for either FSR4 and FSR5. Their deletion does not alter the product spectrum, but the possibility that they catalyze specific enzymatic steps during perithecium development cannot be ruled out. FSR4 might possess a regulatory function in the biosynthesis of fusarubins. The polypeptide is O-methyltransferase fsr2 (Gibberella fujikuroi (strain CBS 195.34 / IMI 58289 / NRRL A-6831) (Bakanae and foot rot disease fungus)).